The chain runs to 241 residues: Thiamine import ATP-binding protein ThiQ (241 aa).

Residues 2–239 form the ABC transporter domain; sequence IQLDKLNHCY…PKDEVLIQYL (238 aa). Residue 41–48 coordinates ATP; sequence GPSGAGKS.

Belongs to the ABC transporter superfamily. Thiamine importer (TC 3.A.1.19.1) family. In terms of assembly, the complex is composed of two ATP-binding proteins (ThiQ), two transmembrane proteins (ThiP) and a solute-binding protein (ThiB).

The protein resides in the cell inner membrane. The catalysed reaction is thiamine(out) + ATP + H2O = thiamine(in) + ADP + phosphate + H(+). Its function is as follows. Part of the ABC transporter complex ThiBPQ involved in thiamine import. Responsible for energy coupling to the transport system. This chain is Thiamine import ATP-binding protein ThiQ, found in Photobacterium profundum (strain SS9).